A 123-amino-acid polypeptide reads, in one-letter code: Large ribosomal subunit protein uL18 (123 aa).

This sequence belongs to the universal ribosomal protein uL18 family. As to quaternary structure, part of the 50S ribosomal subunit; part of the 5S rRNA/L5/L18/L25 subcomplex. Contacts the 5S and 23S rRNAs.

Functionally, this is one of the proteins that bind and probably mediate the attachment of the 5S RNA into the large ribosomal subunit, where it forms part of the central protuberance. This chain is Large ribosomal subunit protein uL18, found in Wolbachia sp. subsp. Brugia malayi (strain TRS).